The following is a 140-amino-acid chain: MGTIFHLDIVSAEESIYSGPAEFIVAPAVMGEVGIFPQHTPMLTRIKSGVVRVKAPLQDDEEVYVSGGMLEVQPDVVTILADTAVRGKDLDEAKALEAKRKAEEIMKNKISEIEYARAQAELIEATAQLAAIQKLRKRGH.

This sequence belongs to the ATPase epsilon chain family. As to quaternary structure, F-type ATPases have 2 components, CF(1) - the catalytic core - and CF(0) - the membrane proton channel. CF(1) has five subunits: alpha(3), beta(3), gamma(1), delta(1), epsilon(1). CF(0) has three main subunits: a, b and c.

It is found in the cell inner membrane. In terms of biological role, produces ATP from ADP in the presence of a proton gradient across the membrane. In Nitrosomonas europaea (strain ATCC 19718 / CIP 103999 / KCTC 2705 / NBRC 14298), this protein is ATP synthase epsilon chain.